The following is a 1003-amino-acid chain: DNA topoisomerase 3-alpha (1003 aa).

A Toprim domain is found at lysine 35–serine 179. Residues aspartate 197 to phenylalanine 617 enclose the Topo IA-type catalytic domain. Tyrosine 362 functions as the O-(5'-phospho-DNA)-tyrosine intermediate in the catalytic mechanism. Positions glycine 400–leucine 426 are disordered. A C4-type zinc finger spans residues cysteine 658–cysteine 685. Positions 815, 817, 840, and 845 each coordinate Zn(2+). Residues cysteine 815 to serine 854 form a GRF-type 1 zinc finger. Residues serine 856–serine 888 are disordered. Positions proline 862 to serine 888 are enriched in low complexity. Zn(2+) is bound by residues cysteine 899, cysteine 901, cysteine 924, and cysteine 932. The GRF-type 2 zinc finger occupies cysteine 899 to asparagine 941. The tract at residues serine 946–glutamine 991 is disordered.

This sequence belongs to the type IA topoisomerase family. In terms of assembly, binds ssDNA. Interacts (via N-terminal region) with BLM; the interaction is direct. Directly interacts with RMI1. Component of the RMI complex, containing at least TOP3A, RMI1 and RMI2. The RMI complex interacts with BLM. Requires Mg(2+) as cofactor. As to expression, highly expressed in testis.

The protein resides in the mitochondrion matrix. It carries out the reaction ATP-independent breakage of single-stranded DNA, followed by passage and rejoining.. Releases the supercoiling and torsional tension of DNA introduced during the DNA replication and transcription by transiently cleaving and rejoining one strand of the DNA duplex. Introduces a single-strand break via transesterification at a target site in duplex DNA. The scissile phosphodiester is attacked by the catalytic tyrosine of the enzyme, resulting in the formation of a DNA-(5'-phosphotyrosyl)-enzyme intermediate and the expulsion of a 3'-OH DNA strand. The free DNA strand then undergoes passage around the unbroken strand thus removing DNA supercoils. Finally, in the religation step, the DNA 3'-OH attacks the covalent intermediate to expel the active-site tyrosine and restore the DNA phosphodiester backbone. As an essential component of the RMI complex it is involved in chromosome separation and the processing of homologous recombination intermediates to limit DNA crossover formation in cells. Has DNA decatenation activity. It is required for mtDNA decatenation and segregation after completion of replication, in a process that does not require BLM, RMI1 and RMI2. In Mus musculus (Mouse), this protein is DNA topoisomerase 3-alpha (Top3a).